The following is a 465-amino-acid chain: Fumarate hydratase class II (465 aa).

Substrate contacts are provided by residues 98-100 (SGT), R126, 129-132 (HPND), 139-141 (SSN), and T187. The active-site Proton donor/acceptor is H188. Residue S318 is part of the active site. Substrate contacts are provided by residues S319 and 324–326 (KVN).

This sequence belongs to the class-II fumarase/aspartase family. Fumarase subfamily. Homotetramer.

It is found in the cytoplasm. The enzyme catalyses (S)-malate = fumarate + H2O. It functions in the pathway carbohydrate metabolism; tricarboxylic acid cycle; (S)-malate from fumarate: step 1/1. Involved in the TCA cycle. Catalyzes the stereospecific interconversion of fumarate to L-malate. The sequence is that of Fumarate hydratase class II from Yersinia pestis.